Consider the following 322-residue polypeptide: CXXC-type zinc finger protein 5 (322 aa).

Residues 1–10 (MSSLGGGSQD) are compositionally biased toward gly residues. The tract at residues 1–100 (MSSLGGGSQD…SGGGSMMGGE (100 aa)) is disordered. Low complexity-rich tracts occupy residues 11 to 20 (AGGSSSSSTN) and 28 to 52 (SGPK…VADD). Threonine 53 is subject to Phosphothreonine. Residues 87–97 (SSGGSGGGSMM) are compositionally biased toward gly residues. The CXXC-type zinc-finger motif lies at 256–297 (GKKKRKRCGMCAPCRRRINCEQCSSCRNRKTGHQICKFRKCE). The short motif at 257 to 262 (KKKRKR) is the Nuclear localization signal element. Positions 263, 266, 269, 275, 278, 281, 291, and 296 each coordinate Zn(2+).

As to quaternary structure, interacts with DVL1. Interacts with RBPJ.

The protein localises to the nucleus. It is found in the cytoplasm. Functionally, may indirectly participate in activation of the NF-kappa-B and MAPK pathways. Acts as a mediator of BMP4-mediated modulation of canonical Wnt signaling activity in neural stem cells. Required for DNA damage-induced ATM phosphorylation, p53 activation and cell cycle arrest. Involved in myelopoiesis. Transcription factor. Binds to the oxygen responsive element of COX4I2 and represses its transcription under hypoxia conditions (4% oxygen), as well as normoxia conditions (20% oxygen). May repress COX4I2 transactivation induced by CHCHD2 and RBPJ. Binds preferentially to DNA containing cytidine-phosphate-guanosine (CpG) dinucleotides over CpH (H=A, T, and C), hemimethylated-CpG and hemimethylated-hydroxymethyl-CpG. This chain is CXXC-type zinc finger protein 5 (CXXC5), found in Homo sapiens (Human).